The following is a 248-amino-acid chain: PACRG-like protein (248 aa).

An N-acetylmethionine modification is found at Met1. The segment covering Met1–Gln29 has biased composition (polar residues). Residues Met1–Gly71 form a disordered region. Over residues Ser39–Glu49 the composition is skewed to low complexity. Ser47 bears the Phosphoserine mark.

The chain is PACRG-like protein (PACRGL) from Homo sapiens (Human).